Here is a 656-residue protein sequence, read N- to C-terminus: Threonine--tRNA ligase (656 aa).

The TGS domain occupies 1-63; that stretch reads MAEIQLTFPD…LEDGAIEIIT (63 aa). The interval 243–541 is catalytic; the sequence is DHRVIGNQLD…LTEIYKGAFP (299 aa). Zn(2+) is bound by residues Cys337, His388, and His518.

It belongs to the class-II aminoacyl-tRNA synthetase family. As to quaternary structure, homodimer. It depends on Zn(2+) as a cofactor.

The protein resides in the cytoplasm. It catalyses the reaction tRNA(Thr) + L-threonine + ATP = L-threonyl-tRNA(Thr) + AMP + diphosphate + H(+). Its function is as follows. Catalyzes the attachment of threonine to tRNA(Thr) in a two-step reaction: L-threonine is first activated by ATP to form Thr-AMP and then transferred to the acceptor end of tRNA(Thr). Also edits incorrectly charged L-seryl-tRNA(Thr). The sequence is that of Threonine--tRNA ligase from Latilactobacillus sakei subsp. sakei (strain 23K) (Lactobacillus sakei subsp. sakei).